We begin with the raw amino-acid sequence, 897 residues long: Cytokine receptor common subunit beta (897 aa).

The first 16 residues, 1–16, serve as a signal peptide directing secretion; that stretch reads MVLAQGLLSMALLALC. Over 17-443 the chain is Extracellular; the sequence is WERSLAGAEE…WDTESVLPMW (427 aa). Cysteines 35 and 45 form a disulfide. Residue N58 is glycosylated (N-linked (GlcNAc...) asparagine). 2 disulfides stabilise this stretch: C75–C96 and C86–C91. Positions 133–240 constitute a Fibronectin type-III 1 domain; that stretch reads PPEPRDLQIS…PEVCWDSQPG (108 aa). N-linked (GlcNAc...) asparagine glycosylation is present at N191. Intrachain disulfides connect C250–C260 and C289–C306. In terms of domain architecture, Fibronectin type-III 2 spans 339–436; sequence QMAPPSLNVT…EWSEARSWDT (98 aa). A glycan (N-linked (GlcNAc...) asparagine) is linked at N346. Positions 425–429 match the WSXWS motif motif; it reads WSEWS. Residues 444-460 form a helical membrane-spanning segment; that stretch reads VLALIVIFLTIAVLLAL. Residues 461-897 are Cytoplasmic-facing; that stretch reads RFCGIYGYRL…WEVNKPGEVC (437 aa). The Box 1 motif motif lies at 474–482; that stretch reads WEEKIPNPS. Disordered stretches follow at residues 498-517, 532-630, 648-812, and 830-849; these read GSMS…WGSR, SEVS…EYLC, PGQA…QPEG, and PGPL…PEIK. The span at 564-574 shows a compositional bias: pro residues; it reads EQPPSPQPGPP. The segment covering 723–752 has biased composition (low complexity); sequence SGASSVSLVPSLGLPSDQTPSLCPGLASGP. Y766 is subject to Phosphotyrosine. The span at 830-840 shows a compositional bias: low complexity; that stretch reads PGPLSLRSKPS.

It belongs to the type I cytokine receptor family. Type 4 subfamily. In terms of assembly, heterodimer of an alpha and a beta subunit. The beta subunit is common to the IL3, IL5 and GM-CSF receptors. The signaling GM-CSF receptor complex is a dodecamer of two head-to-head hexamers of two alpha, two beta, and two ligand subunits. Interacts with TMEM102; this interaction occurs preferentially in the absence of CSF2. Interacts with FCER1G; this interaction is direct. Interacts with LYN. Interacts with JAK1. In terms of processing, may be phosphorylated by LYN.

It is found in the membrane. Cell surface receptor that plays a role in immune response and controls the production and differentiation of hematopoietic progenitor cells into lineage-restricted cells. Acts by forming an heterodimeric receptor through interaction with different partners such as IL3RA, IL5RA or CSF2RA. In turn, participates in various signaling pathways including interleukin-3, interleukin-5 and granulocyte-macrophage colony-stimulating factor/CSF2 pathways. In unstimulated conditions, interacts constitutively with JAK1 and ligand binding leads to JAK1 stimulation and subsequent activation of the JAK-STAT pathway. This is Cytokine receptor common subunit beta (CSF2RB) from Homo sapiens (Human).